The chain runs to 479 residues: NADH-quinone oxidoreductase subunit N 2 (479 aa).

14 helical membrane passes run 9 to 29, 40 to 60, 75 to 95, 110 to 130, 131 to 151, 164 to 184, 206 to 226, 238 to 258, 272 to 292, 299 to 319, 326 to 346, 371 to 391, 404 to 424, and 449 to 469; these read WALA…LLIV, LLLW…LMLA, RFAV…FFLS, YVLL…IDLL, SIYV…GFLR, VILG…IYGL, LLLA…AVPF, PTTI…AVIL, WIIV…VALV, LLAY…VAGG, VMLY…AVIM, ALLM…AGFF, GFVA…YFYI, and ATLA…AWFL.

It belongs to the complex I subunit 2 family. As to quaternary structure, NDH-1 is composed of 14 different subunits. Subunits NuoA, H, J, K, L, M, N constitute the membrane sector of the complex.

It localises to the cell inner membrane. The enzyme catalyses a quinone + NADH + 5 H(+)(in) = a quinol + NAD(+) + 4 H(+)(out). Its function is as follows. NDH-1 shuttles electrons from NADH, via FMN and iron-sulfur (Fe-S) centers, to quinones in the respiratory chain. The immediate electron acceptor for the enzyme in this species is believed to be ubiquinone. Couples the redox reaction to proton translocation (for every two electrons transferred, four hydrogen ions are translocated across the cytoplasmic membrane), and thus conserves the redox energy in a proton gradient. In Rhizobium meliloti (strain 1021) (Ensifer meliloti), this protein is NADH-quinone oxidoreductase subunit N 2.